We begin with the raw amino-acid sequence, 440 residues long: 5-methylthioadenosine/S-adenosylhomocysteine deaminase (440 aa).

The Zn(2+) site is built by His69 and His71. Substrate contacts are provided by Glu98 and His190. His217 serves as a coordination point for Zn(2+). Substrate is bound by residues Glu220 and Asp305. Asp305 is a binding site for Zn(2+).

It belongs to the metallo-dependent hydrolases superfamily. MTA/SAH deaminase family. Zn(2+) is required as a cofactor.

The catalysed reaction is S-adenosyl-L-homocysteine + H2O + H(+) = S-inosyl-L-homocysteine + NH4(+). It catalyses the reaction S-methyl-5'-thioadenosine + H2O + H(+) = S-methyl-5'-thioinosine + NH4(+). Catalyzes the deamination of 5-methylthioadenosine and S-adenosyl-L-homocysteine into 5-methylthioinosine and S-inosyl-L-homocysteine, respectively. Is also able to deaminate adenosine. This Desulfovibrio desulfuricans (strain ATCC 27774 / DSM 6949 / MB) protein is 5-methylthioadenosine/S-adenosylhomocysteine deaminase.